Reading from the N-terminus, the 765-residue chain is Protein transport protein Sec23A (765 aa).

Zn(2+) contacts are provided by Cys-61, Cys-66, Cys-85, and Cys-88. Residues 632 to 718 (PEPVLLDSSS…EHGGSQARFL (87 aa)) form a Gelsolin-like repeat.

Belongs to the SEC23/SEC24 family. SEC23 subfamily. As to quaternary structure, COPII is composed of at least five proteins: the Sec23/24 complex, the Sec13/31 complex and Sar1.

It is found in the cytoplasmic vesicle. It localises to the COPII-coated vesicle membrane. The protein localises to the endoplasmic reticulum membrane. The protein resides in the cytoplasm. Its subcellular location is the cytosol. Component of the coat protein complex II (COPII) which promotes the formation of transport vesicles from the endoplasmic reticulum (ER). The coat has two main functions, the physical deformation of the endoplasmic reticulum membrane into vesicles and the selection of cargo molecules for their transport to the Golgi complex. This is Protein transport protein Sec23A from Xenopus tropicalis (Western clawed frog).